The primary structure comprises 474 residues: L-arabinose isomerase (474 aa).

The Mn(2+) site is built by E306, E331, H348, and H447.

It belongs to the arabinose isomerase family. It depends on Mn(2+) as a cofactor.

It carries out the reaction beta-L-arabinopyranose = L-ribulose. Its pathway is carbohydrate degradation; L-arabinose degradation via L-ribulose; D-xylulose 5-phosphate from L-arabinose (bacterial route): step 1/3. Its function is as follows. Catalyzes the conversion of L-arabinose to L-ribulose. The protein is L-arabinose isomerase of Levilactobacillus brevis (strain ATCC 367 / BCRC 12310 / CIP 105137 / JCM 1170 / LMG 11437 / NCIMB 947 / NCTC 947) (Lactobacillus brevis).